The chain runs to 552 residues: MERFLRKYNISGDYANATRTFLAISPQWTCSHLKRNCLFNGMCVKQHFERAMIAATDAEEPAKAYKLVELAKEAMYDRETVWLQCFKSFSQPYEEDVEGKMKRCGAQLLEDYRKSGMMDEAVKQSALVNSERIRLDDSLSAMPYIYVPINDGQIVNPTFISRYRQIAYYFYNPDAADDWIDPNLFGIRGQHNQIKREVERQINTCPYTGYRGRVFQVMFLPIQLINFLRMDDFAKHFNRYASMAIQQYLRVGYAEEIRYVQQLFGRVPTGEFPLHQMMLMRRDLPTRDRSIVEARVRRSGDESWQSWLLPMIIIREGLDHQDRWEWFIDYMDRKHTCQLCYLKHSKQIPTCSVIDVRASELTGCSPFKMVKIEEHVGNDSVFKTKLVRDEQIGRIGDHYYTTNCYTGAEALITTAIHIHHWIRGSGIWNDEGWQEGIFMLGRVLLRWELTKAQRSALLRLFCFVCYGYAPRADGTIPDWNNLGNFLDIILKGPELSEDEDERAYATMFEMVRCIITLCYAEKVHFAGFAAPACEGGEVINLAAAMSQMWMEY.

The protein belongs to the orbivirus non-structural protein NS1 family.

This chain is Non-structural protein NS1 (Segment-5), found in Bluetongue virus 10 (isolate USA) (BTV 10).